A 291-amino-acid polypeptide reads, in one-letter code: Acetyl-coenzyme A carboxylase carboxyl transferase subunit beta (291 aa).

In terms of domain architecture, CoA carboxyltransferase N-terminal spans 29–291 (IMTKCPQCKK…TGGEREWLEN (263 aa)). Residues Cys-33, Cys-36, Cys-52, and Cys-55 each contribute to the Zn(2+) site. Residues 33–55 (CPQCKKIMLTKELDKNLRVCMNC) form a C4-type zinc finger.

This sequence belongs to the AccD/PCCB family. Acetyl-CoA carboxylase is a heterohexamer composed of biotin carboxyl carrier protein (AccB), biotin carboxylase (AccC) and two subunits each of ACCase subunit alpha (AccA) and ACCase subunit beta (AccD). Zn(2+) serves as cofactor.

The protein resides in the cytoplasm. It catalyses the reaction N(6)-carboxybiotinyl-L-lysyl-[protein] + acetyl-CoA = N(6)-biotinyl-L-lysyl-[protein] + malonyl-CoA. It participates in lipid metabolism; malonyl-CoA biosynthesis; malonyl-CoA from acetyl-CoA: step 1/1. Component of the acetyl coenzyme A carboxylase (ACC) complex. Biotin carboxylase (BC) catalyzes the carboxylation of biotin on its carrier protein (BCCP) and then the CO(2) group is transferred by the transcarboxylase to acetyl-CoA to form malonyl-CoA. The sequence is that of Acetyl-coenzyme A carboxylase carboxyl transferase subunit beta from Bacillus pumilus (strain SAFR-032).